The chain runs to 312 residues: Uracil-DNA glycosylase (312 aa).

The segment covering 1–11 has biased composition (basic and acidic residues); sequence MSSACDHETEA. The tract at residues 1–61 is disordered; that stretch reads MSSACDHETE…PPKRRRPCGL (61 aa). Positions 22 to 33 are enriched in polar residues; the sequence is EENGSNSSTPTS. D155 (proton acceptor) is an active-site residue.

This sequence belongs to the uracil-DNA glycosylase (UDG) superfamily. UNG family.

It is found in the host nucleus. It catalyses the reaction Hydrolyzes single-stranded DNA or mismatched double-stranded DNA and polynucleotides, releasing free uracil.. Its function is as follows. Excises uracil residues from the DNA which can arise as a result of misincorporation of dUMP residues by DNA polymerase or deamination of cytosines. Therefore may reduce deleterious uracil incorporation into the viral genome, particularly in terminally differentiated cells which lack DNA repair enzymes. The sequence is that of Uracil-DNA glycosylase (61) from Equine herpesvirus 1 (strain V592) (EHV-1).